Reading from the N-terminus, the 595-residue chain is Alginate biosynthesis sensor protein KinB (595 aa).

At 1-12 (MSMPLPMKLRTR) the chain is on the cytoplasmic side. Residues 13–33 (LFLSISALITVSLFGLLLGLF) form a helical membrane-spanning segment. Topologically, residues 34 to 167 (SVMQLGRAQE…SDAETSARHR (134 aa)) are periplasmic. The helical transmembrane segment at 168–188 (AYLVAGLLGLVGVAILLIGFV) threads the bilayer. Over 189-595 (TAHSIARRFG…GARFYMLLPV (407 aa)) the chain is Cytoplasmic. An HAMP domain is found at 195–247 (RRFGAPIETLARAADRIGEGDFDVTLPMTNVAEVGQLTRRFGLMAEALRQYRK). The PAS domain occupies 258–323 (RRLQAVLDSI…AVEKALLGEV (66 aa)). Residues 327–369 (AMPDLVVDVAGESRLLAWSLYPVTHPGGHSVGAVLVVRDVTEQ) form the PAC domain. Positions 382 to 595 (RASHELRTPV…GARFYMLLPV (214 aa)) constitute a Histidine kinase domain. Phosphohistidine; by autocatalysis is present on His-385.

In terms of processing, autophosphorylated.

It is found in the cell inner membrane. The catalysed reaction is ATP + protein L-histidine = ADP + protein N-phospho-L-histidine.. In terms of biological role, member of the two-component regulatory system AlgB/KinB involved in regulation of alginate biosynthesis genes. KinB functions as a membrane-associated protein kinase that phosphorylates AlgB, probably in response to environmental signals. This Pseudomonas aeruginosa protein is Alginate biosynthesis sensor protein KinB (kinB).